The primary structure comprises 229 residues: Uracil-DNA glycosylase (229 aa).

Asp-64 acts as the Proton acceptor in catalysis.

Belongs to the uracil-DNA glycosylase (UDG) superfamily. UNG family.

It is found in the cytoplasm. It carries out the reaction Hydrolyzes single-stranded DNA or mismatched double-stranded DNA and polynucleotides, releasing free uracil.. In terms of biological role, excises uracil residues from the DNA which can arise as a result of misincorporation of dUMP residues by DNA polymerase or due to deamination of cytosine. The sequence is that of Uracil-DNA glycosylase from Escherichia coli (strain 55989 / EAEC).